Here is a 210-residue protein sequence, read N- to C-terminus: Pyridoxine/pyridoxamine 5'-phosphate oxidase (210 aa).

Residues 7-10 (REDY) and K65 contribute to the substrate site. FMN contacts are provided by residues 60-65 (RMVLLK), 75-76 (FT), R81, K82, and Q104. Residues Y122, R126, and S130 each contribute to the substrate site. FMN contacts are provided by residues 139-140 (QS) and W183. 189–191 (RLH) lines the substrate pocket. FMN is bound at residue R193.

Belongs to the pyridoxamine 5'-phosphate oxidase family. In terms of assembly, homodimer. FMN serves as cofactor.

The catalysed reaction is pyridoxamine 5'-phosphate + O2 + H2O = pyridoxal 5'-phosphate + H2O2 + NH4(+). The enzyme catalyses pyridoxine 5'-phosphate + O2 = pyridoxal 5'-phosphate + H2O2. It functions in the pathway cofactor metabolism; pyridoxal 5'-phosphate salvage; pyridoxal 5'-phosphate from pyridoxamine 5'-phosphate: step 1/1. The protein operates within cofactor metabolism; pyridoxal 5'-phosphate salvage; pyridoxal 5'-phosphate from pyridoxine 5'-phosphate: step 1/1. In terms of biological role, catalyzes the oxidation of either pyridoxine 5'-phosphate (PNP) or pyridoxamine 5'-phosphate (PMP) into pyridoxal 5'-phosphate (PLP). This Neisseria gonorrhoeae (strain ATCC 700825 / FA 1090) protein is Pyridoxine/pyridoxamine 5'-phosphate oxidase.